Reading from the N-terminus, the 1872-residue chain is Chitin synthase 6 (1872 aa).

The disordered stretch occupies residues 1-23; the sequence is MAQHLPPVGGNGGAHTQPSLPAL. One can recognise a Myosin motor domain in the interval 1–779; the sequence is MAQHLPPVGG…CWMEIAQLSD (779 aa). 104–111 is a binding site for ATP; that stretch reads GESGSGKT. N123, N291, N428, and N559 each carry an N-linked (GlcNAc...) asparagine glycan. A disordered region spans residues 587-652; sequence VMQASVSSKP…VNKPSEEGAS (66 aa). An actin-binding region spans residues 659–683; it reads LDNVTKSFHAQNTNAYFVFCLKPND. N661 carries an N-linked (GlcNAc...) asparagine glycan. A run of 2 helical transmembrane segments spans residues 881 to 901 and 920 to 940; these read WVFI…QHLG and FIIW…PMLV. In terms of domain architecture, Cytochrome b5 heme-binding spans 944 to 1003; the sequence is QYVFTGEELSAYNGKDGKASYAAIRGQVFDIGSFIPRHPLPYLPSKLFTQYAGTDITGLF. N1030, N1055, and N1120 each carry an N-linked (GlcNAc...) asparagine glycan. A helical membrane pass occupies residues 1193–1213; that stretch reads FILAVTIILCSIIAFKFLAAL. N1450 and N1556 each carry an N-linked (GlcNAc...) asparagine glycan. 3 helical membrane-spanning segments follow: residues 1581–1601, 1614–1634, and 1641–1661; these read FIVF…AYIV, VPVL…IIFI, and MIAW…GLPL. In terms of domain architecture, DEK-C spans 1814-1869; sequence LPSDDALLAEIREILRTADLMTVTKKGVKQELERRFGVNLDSRRAYINSATEALLS.

It belongs to the chitin synthase family. Class V subfamily.

It localises to the cell membrane. It catalyses the reaction [(1-&gt;4)-N-acetyl-beta-D-glucosaminyl](n) + UDP-N-acetyl-alpha-D-glucosamine = [(1-&gt;4)-N-acetyl-beta-D-glucosaminyl](n+1) + UDP + H(+). Polymerizes chitin, a structural polymer of the cell wall and septum, by transferring the sugar moiety of UDP-GlcNAc to the non-reducing end of the growing chitin polymer. Required for appressorium penetration and invasive growth. This Pyricularia oryzae (strain 70-15 / ATCC MYA-4617 / FGSC 8958) (Rice blast fungus) protein is Chitin synthase 6.